We begin with the raw amino-acid sequence, 425 residues long: Serine--tRNA ligase (425 aa).

233-235 provides a ligand contact to L-serine; that stretch reads TAE. ATP is bound at residue 264–266; that stretch reads RAE. Position 287 (Glu-287) interacts with L-serine. An ATP-binding site is contributed by 351 to 354; sequence EISS. Ser-387 provides a ligand contact to L-serine.

This sequence belongs to the class-II aminoacyl-tRNA synthetase family. Type-1 seryl-tRNA synthetase subfamily. In terms of assembly, homodimer. The tRNA molecule binds across the dimer.

The protein resides in the cytoplasm. The catalysed reaction is tRNA(Ser) + L-serine + ATP = L-seryl-tRNA(Ser) + AMP + diphosphate + H(+). The enzyme catalyses tRNA(Sec) + L-serine + ATP = L-seryl-tRNA(Sec) + AMP + diphosphate + H(+). Its pathway is aminoacyl-tRNA biosynthesis; selenocysteinyl-tRNA(Sec) biosynthesis; L-seryl-tRNA(Sec) from L-serine and tRNA(Sec): step 1/1. Catalyzes the attachment of serine to tRNA(Ser). Is also able to aminoacylate tRNA(Sec) with serine, to form the misacylated tRNA L-seryl-tRNA(Sec), which will be further converted into selenocysteinyl-tRNA(Sec). The chain is Serine--tRNA ligase from Clostridium perfringens (strain ATCC 13124 / DSM 756 / JCM 1290 / NCIMB 6125 / NCTC 8237 / Type A).